A 267-amino-acid chain; its full sequence is Ribosomal RNA small subunit methyltransferase A (267 aa).

The S-adenosyl-L-methionine site is built by Asn-18, Leu-20, Gly-45, Glu-66, Asp-91, and Asn-112.

This sequence belongs to the class I-like SAM-binding methyltransferase superfamily. rRNA adenine N(6)-methyltransferase family. RsmA subfamily.

The protein resides in the cytoplasm. It catalyses the reaction adenosine(1518)/adenosine(1519) in 16S rRNA + 4 S-adenosyl-L-methionine = N(6)-dimethyladenosine(1518)/N(6)-dimethyladenosine(1519) in 16S rRNA + 4 S-adenosyl-L-homocysteine + 4 H(+). Its function is as follows. Specifically dimethylates two adjacent adenosines (A1518 and A1519) in the loop of a conserved hairpin near the 3'-end of 16S rRNA in the 30S particle. May play a critical role in biogenesis of 30S subunits. This chain is Ribosomal RNA small subunit methyltransferase A, found in Shewanella denitrificans (strain OS217 / ATCC BAA-1090 / DSM 15013).